Here is a 66-residue protein sequence, read N- to C-terminus: LYR motif-containing protein PHYPADRAFT_186863 (66 aa).

It belongs to the complex I LYR family. LYRM9 subfamily.

This chain is LYR motif-containing protein PHYPADRAFT_186863, found in Physcomitrium patens (Spreading-leaved earth moss).